The chain runs to 489 residues: L-asparagine permease 1 (489 aa).

Helical transmembrane passes span 25 to 45 (QLQMIGIGGAIGTGLFLGAGG), 49 to 69 (KAGPGLFLVYGVCGVFVFLIL), 100 to 120 (AVGWMYFLHWAMTSIVDTTAI), 137 to 157 (ILALIALTVVLSMNLISVEWF), 162 to 182 (FWAALIKVLALMAFLVVGTVF), 210 to 230 (WLPLLIVTSGVVFAYSAVELV), 255 to 275 (IAIFYVGSVALLALLLPYTAY), 289 to 309 (IGFHGAGDLMNIVVLTAALSS), 344 to 364 (YGGIVLTAVITLFGVALNAFK), 369 to 389 (FEIVLNMSALGIIAGWATIVL), 413 to 433 (SPYSGYLTLLFLLVVLVTMAS), and 439 to 459 (TWTVATLIIVIPALTAGWYLV).

This sequence belongs to the amino acid-polyamine-organocation (APC) superfamily. Amino acid transporter (AAT) (TC 2.A.3.1) family.

It localises to the cell membrane. The protein is L-asparagine permease 1 (ansP1) of Mycobacterium tuberculosis (strain CDC 1551 / Oshkosh).